Here is a 516-residue protein sequence, read N- to C-terminus: Probable serine/threonine-protein kinase DDB_G0293276 (516 aa).

The interval 69-115 (SIEIDDENPYNTNNNNNSNNNNNNNNNNCNNSNNSNNNKNINSLDNI) is disordered. Residues 79–115 (NTNNNNNSNNNNNNNNNNCNNSNNSNNNKNINSLDNI) are compositionally biased toward low complexity. The Protein kinase domain occupies 232–479 (YKHVECIGKG…SKDIKNHPYF (248 aa)). ATP is bound by residues 238 to 246 (IGKGGYGVV) and K261. D350 (proton acceptor) is an active-site residue.

It belongs to the protein kinase superfamily. AGC Ser/Thr protein kinase family.

The enzyme catalyses L-seryl-[protein] + ATP = O-phospho-L-seryl-[protein] + ADP + H(+). It catalyses the reaction L-threonyl-[protein] + ATP = O-phospho-L-threonyl-[protein] + ADP + H(+). This chain is Probable serine/threonine-protein kinase DDB_G0293276, found in Dictyostelium discoideum (Social amoeba).